The primary structure comprises 80 residues: Large ribosomal subunit protein uL24 (80 aa).

It belongs to the universal ribosomal protein uL24 family. In terms of assembly, part of the 50S ribosomal subunit.

In terms of biological role, one of two assembly initiator proteins, it binds directly to the 5'-end of the 23S rRNA, where it nucleates assembly of the 50S subunit. One of the proteins that surrounds the polypeptide exit tunnel on the outside of the subunit. This chain is Large ribosomal subunit protein uL24, found in Chlorobium phaeobacteroides (strain BS1).